Here is a 203-residue protein sequence, read N- to C-terminus: Ras-related protein Rab5A (203 aa).

Residue 18-26 coordinates GTP; that stretch reads GDVGTGKSS. The Effector region signature appears at 40 to 48; the sequence is QESTIGAAF. GTP contacts are provided by residues 66–70, 124–127, and 154–155; these read DTAGQ, NKAD, and SA. 2 S-geranylgeranyl cysteine lipidation sites follow: C201 and C202.

This sequence belongs to the small GTPase superfamily. Rab family. As to quaternary structure, interacts with VPS9A. Interacts with NSF and RBP-L. As to expression, highly expressed in roots. Expressed at low levels in shoots, flowers and grains.

It localises to the prevacuolar compartment membrane. The protein localises to the golgi apparatus membrane. Its subcellular location is the cell membrane. The protein resides in the protein storage vacuole membrane. Functionally, plays an important role in intracellular trafficking of seed storage proteins to the protein storage vacuoles (PSVs). Participates in the transport of the proglutelins from the Golgi apparatus to the PSVs in endosperm. Functions cooperatively with VPS9A to regulate post-Golgi dense vesicle-mediated transport of storage proteins to the type II protein bodies (PBII) protein storage vacuoles in developing endosperm. Involved in the maintenance of the general structural organization of the endomembrane system in developing endosperm. Binds GTP in vitro. Forms a quaternary complex with the two glutelin zipcode RNA-binding proteins RBP-L and RBP-P, and the membrane trafficking factor NSF. This quaternay complex carries glutelin mRNAs for active transport on endosomes to the cortical endoplasmic reticulum membrane, and enables endosome-mediated glutelin mRNA transport in endosperm cells. The protein is Ras-related protein Rab5A of Oryza sativa subsp. japonica (Rice).